A 334-amino-acid chain; its full sequence is Adenosine deaminase (334 aa).

Positions 12 and 14 each coordinate Zn(2+). Substrate is bound by residues H14, D16, and G170. H197 provides a ligand contact to Zn(2+). Catalysis depends on E200, which acts as the Proton donor. D278 serves as a coordination point for Zn(2+). A substrate-binding site is contributed by D279.

It belongs to the metallo-dependent hydrolases superfamily. Adenosine and AMP deaminases family. Adenosine deaminase subfamily. Requires Zn(2+) as cofactor.

The enzyme catalyses adenosine + H2O + H(+) = inosine + NH4(+). It carries out the reaction 2'-deoxyadenosine + H2O + H(+) = 2'-deoxyinosine + NH4(+). Its function is as follows. Catalyzes the hydrolytic deamination of adenosine and 2-deoxyadenosine. In Yersinia pseudotuberculosis serotype IB (strain PB1/+), this protein is Adenosine deaminase.